The primary structure comprises 551 residues: Scaffold protein D13 ortholog (551 aa).

This sequence belongs to the poxviridae protein D13 family. Homotrimer. Self-assembles to form a layer. Interacts with A17 (via N-terminus); this interaction is necessary for D13 association with membranes.

Its subcellular location is the membrane. Its function is as follows. Scaffold protein which forms a transitory spherical honeycomb lattice providing curvature and rigidity to the convex membrane of crescent and immature virions (IV). This association occurs concomitantly with viral membrane formation. Targeted by the drug rifampicin, which prevents the formation of this lattice, and hence virus morphogenesis. In the presence of rifampicin, irregularly shaped membranes that lack the honeycomb layer accumulate around areas of electron-dense viroplasm. This layer is lost from virions during maturation from IV to mature virion (MV), through the proteolysis of A17 N-terminus. This Sus scrofa (Pig) protein is Scaffold protein D13 ortholog.